We begin with the raw amino-acid sequence, 294 residues long: Agamous-like MADS-box protein AGL82 (294 aa).

One can recognise an MADS-box domain in the interval 1 to 51 (MVPKVVDLQRIANDKTRITTYKKRKASLYKKAQEFSTLCGVETCLIVYGPT).

As to quaternary structure, interacts with MEE14/CBP1.

It localises to the nucleus. Probable transcription factor that may function in the maintenance of the proper function of the central cell in pollen tube attraction. The protein is Agamous-like MADS-box protein AGL82 of Arabidopsis thaliana (Mouse-ear cress).